Reading from the N-terminus, the 180-residue chain is E1B protein, small T-antigen (180 aa).

The interval 142-180 (GPAAPLARQGSQQEEQQQRQEEEQVQEEMRSGLDPPTEN) is disordered. Residues 157–172 (QQQRQEEEQVQEEMRS) are compositionally biased toward basic and acidic residues.

Belongs to the adenoviridae E1B 19 kDa protein family.

In Simian adenovirus serotype 7 (SAdV-7), this protein is E1B protein, small T-antigen.